Reading from the N-terminus, the 445-residue chain is ATP-dependent protease ATPase subunit HslU (445 aa).

ATP is bound by residues I17, 59–64 (GVGKTE), D254, E319, and R391.

It belongs to the ClpX chaperone family. HslU subfamily. As to quaternary structure, a double ring-shaped homohexamer of HslV is capped on each side by a ring-shaped HslU homohexamer. The assembly of the HslU/HslV complex is dependent on binding of ATP.

It localises to the cytoplasm. ATPase subunit of a proteasome-like degradation complex; this subunit has chaperone activity. The binding of ATP and its subsequent hydrolysis by HslU are essential for unfolding of protein substrates subsequently hydrolyzed by HslV. HslU recognizes the N-terminal part of its protein substrates and unfolds these before they are guided to HslV for hydrolysis. The chain is ATP-dependent protease ATPase subunit HslU from Pseudomonas syringae pv. tomato (strain ATCC BAA-871 / DC3000).